A 354-amino-acid polypeptide reads, in one-letter code: MGCTLSAEDKAAVERSKMIDRNLREDGEKAAKEVKLLLLGAGESGKSTIVKQMKIIHEDGYSEDECKQYKVVVYSNTIQSIIAIIRAMGRLKIDFGESARADDARQLFVLAGSAEEGVMTSELAGVIKRLWRDGGVQACFSRSREYQLNDSASYYLNDLDRISQTNYIPTQQDVLRTRVKTTGIVETHFTFKELYFKMFDVGGQRSERKKWIHCFEGVTAIIFCVALSDYDLVLAEDEEMNRMHESMKLFDSICNNKWFTDTSIILFLNKKDLFEEKIKRSPLTICYPEYTGSNTYEEAAAYIQCQFEDLNRRKDTKEVYTHFTCATDTKNVQFVFDAVTDVIIKNNLKECGLY.

A lipid anchor (N-myristoyl glycine) is attached at Gly2. Cys3 is lipidated: S-palmitoyl cysteine. In terms of domain architecture, G-alpha spans 32-354 (KEVKLLLLGA…KNNLKECGLY (323 aa)). The interval 35–48 (KLLLLGAGESGKST) is G1 motif. GTP contacts are provided by Gly42, Glu43, Ser44, Gly45, Lys46, Ser47, Thr48, Asp150, Ser151, Leu175, Arg176, Thr177, Arg178, Val179, Lys180, Thr181, Val201, Gly203, Asn269, Lys270, Asp272, Leu273, Cys325, Ala326, and Thr327. Ser47 is a Mg(2+) binding site. Residues 173–181 (DVLRTRVKT) form a G2 motif region. Thr181 contacts Mg(2+). A G3 motif region spans residues 196 to 205 (FKMFDVGGQR). Residues 265 to 272 (ILFLNKKD) are G4 motif. The segment at 324–329 (TCATDT) is G5 motif.

The protein belongs to the G-alpha family. G(i/o/t/z) subfamily. In terms of assembly, heterotrimeric G proteins are composed of 3 units; alpha, beta and gamma. The alpha subunit contains the guanine nucleotide binding site. GTP binding causes dissociation of the heterotrimer, liberating the individual subunits so that they can interact with downstream effector proteins. Forms a complex with CCDC88A/GIV and EGFR which leads to enhanced EGFR signaling and triggering of cell migration; ligand stimulation is required for recruitment of GNAI3 to the complex. Interacts (inactive GDP-bound form) with CCDC88A/GIV (via GBA motif); the interaction leads to activation of GNAI3. Interacts (inactive GDP-bound form) with CCDC88C/DAPLE (via GBA motif); the interaction leads to activation of GNAI3. Interacts (inactive GDP-bound form) with NUCB1 (via GBA motif) and NUCB2 (via GBA motif); the interaction leads to activation of GNAI3. Interacts (inactive GDP-bound form) with PLCD4 (via GBA motif); the interaction leads to activation of GNAI3. Interacts with INSR; the interaction is probably mediated by CCDC88A/GIV. Interacts with GPSM1. Interacts (GDP-bound form) with GPSM2 (via GoLoco domains). Does not interact with RGS2. Interacts with RGS8 and RGS10; this strongly enhances the intrinsic GTPase activity. Interacts with RGS16; this strongly enhances the intrinsic GTPase activity. Interacts with RGS12. Interacts (via active GTP- or inactive GDP-bound form) with RGS14. Interacts (via active GTP-bound form) with TRPC5 (via ANK repeats) in a homotetrameric ion channel; the interaction is direct and activates the channel activity.

It localises to the cytoplasm. The protein localises to the cell membrane. It is found in the cytoskeleton. Its subcellular location is the microtubule organizing center. The protein resides in the centrosome. Functionally, heterotrimeric guanine nucleotide-binding proteins (G proteins) function as transducers downstream of G protein-coupled receptors (GPCRs) in numerous signaling cascades. The alpha chain contains the guanine nucleotide binding site and alternates between an active, GTP-bound state and an inactive, GDP-bound state. Signaling by an activated GPCR promotes GDP release and GTP binding. The alpha subunit has a low GTPase activity that converts bound GTP to GDP, thereby terminating the signal. Both GDP release and GTP hydrolysis are modulated by numerous regulatory proteins. Signaling is mediated via effector proteins, such as adenylate cyclase. Inhibits adenylate cyclase activity, leading to decreased intracellular cAMP levels. Stimulates the activity of receptor-regulated K(+) channels. The active GTP-bound form prevents the association of RGS14 with centrosomes and is required for the translocation of RGS14 from the cytoplasm to the plasma membrane. May play a role in cell division. The active GTP-bound form activates the calcium permeant TRPC5 ion channels. In Mus musculus (Mouse), this protein is Guanine nucleotide-binding protein G(i) subunit alpha-3 (Gnai3).